We begin with the raw amino-acid sequence, 194 residues long: Large ribosomal subunit protein bL12m (194 aa).

The N-terminal 33 residues, 1–33, are a transit peptide targeting the mitochondrion; the sequence is MSLRILAKRSSSIWMKTRVTPALISPITITTRF. N-linked (GlcNAc...) asparagine glycosylation occurs at Asn34. Residues 101 to 120 are disordered; it reads AGNVPSSTGEAGSGAEEEAK. The span at 105–114 shows a compositional bias: low complexity; sequence PSSTGEAGSG.

The protein belongs to the bacterial ribosomal protein bL12 family. As to quaternary structure, component of the mitochondrial large ribosomal subunit (mt-LSU). Mature yeast 74S mitochondrial ribosomes consist of a small (37S) and a large (54S) subunit. The 37S small subunit contains a 15S ribosomal RNA (15S mt-rRNA) and 34 different proteins. The 54S large subunit contains a 21S rRNA (21S mt-rRNA) and 46 different proteins. N-glycosylated.

It is found in the mitochondrion. Its function is as follows. Component of the mitochondrial ribosome (mitoribosome), a dedicated translation machinery responsible for the synthesis of mitochondrial genome-encoded proteins, including at least some of the essential transmembrane subunits of the mitochondrial respiratory chain. The mitoribosomes are attached to the mitochondrial inner membrane and translation products are cotranslationally integrated into the membrane. The polypeptide is Large ribosomal subunit protein bL12m (MNP1) (Saccharomyces cerevisiae (strain ATCC 204508 / S288c) (Baker's yeast)).